A 175-amino-acid polypeptide reads, in one-letter code: Ribosome-binding factor A (175 aa).

Residues 131–175 are disordered; that stretch reads KPAGEADPYRDRGSVDEPSDAGGLVIRTSDGLEAENTGDDYQAED. A compositionally biased stretch (acidic residues) spans 162–175; the sequence is LEAENTGDDYQAED.

Belongs to the RbfA family. Monomer. Binds 30S ribosomal subunits, but not 50S ribosomal subunits or 70S ribosomes.

The protein resides in the cytoplasm. Functionally, one of several proteins that assist in the late maturation steps of the functional core of the 30S ribosomal subunit. Associates with free 30S ribosomal subunits (but not with 30S subunits that are part of 70S ribosomes or polysomes). Required for efficient processing of 16S rRNA. May interact with the 5'-terminal helix region of 16S rRNA. The protein is Ribosome-binding factor A of Mycobacterium ulcerans (strain Agy99).